The following is a 317-amino-acid chain: Putative 2-hydroxyacid dehydrogenase SAR2389 (317 aa).

Residues 155 to 156, 234 to 236, and Asp-260 each bind NAD(+); these read EI and ASR. Arg-236 is a catalytic residue. Glu-265 is an active-site residue. The active-site Proton donor is the His-283. Residue 283–286 participates in NAD(+) binding; sequence HIGN.

The protein belongs to the D-isomer specific 2-hydroxyacid dehydrogenase family.

This chain is Putative 2-hydroxyacid dehydrogenase SAR2389, found in Staphylococcus aureus (strain MRSA252).